The following is a 97-amino-acid chain: Alpha-latrotoxin associated low molecular weight protein 2 (97 aa).

Positions 1 to 19 (MFKLICIVFIATILSITSA) are cleaved as a signal peptide. Intrachain disulfides connect Cys36/Cys72, Cys52/Cys68, and Cys55/Cys81.

It belongs to the arthropod CHH/MIH/GIH/VIH hormone family. In terms of tissue distribution, expressed by the venom gland.

It localises to the secreted. Its function is as follows. May increase the toxicity of alpha-latrotoxin and/or other venom components. Is non-toxic to mice and to the cockroach Periplaneta americana. This is Alpha-latrotoxin associated low molecular weight protein 2 from Steatoda grossa (False black widow).